Reading from the N-terminus, the 213-residue chain is MKNYYLVDEKRKTPVSTWEKISQALRRSVKLELFVGLFVMMRELLKRNNSATIKYPFEKVKLDNRYRAVHRLMRFIESENERCIGCGLCEKICISNCIRMETSLDENGRKKVENYSINLGRCIYCGFCAEVCPELAIVHGTEYENAAEQRSYFGYKQDFLTPIDKLKNQVEFEGAGSLRKDANLWVKKTPNYYDVMIERALENQNTQEQGENK.

4Fe-4S ferredoxin-type domains follow at residues Arg-74–Ser-103 and Glu-113–Glu-142. [4Fe-4S] cluster-binding residues include Cys-83, Cys-86, Cys-89, Cys-93, Cys-122, Cys-125, Cys-128, and Cys-132.

This sequence belongs to the complex I 23 kDa subunit family. As to quaternary structure, NDH-1 is composed of 14 different subunits. Subunits NuoA, H, J, K, L, M, N constitute the membrane sector of the complex. [4Fe-4S] cluster is required as a cofactor.

It is found in the cell inner membrane. It carries out the reaction a quinone + NADH + 5 H(+)(in) = a quinol + NAD(+) + 4 H(+)(out). NDH-1 shuttles electrons from NADH, via FMN and iron-sulfur (Fe-S) centers, to quinones in the respiratory chain. The immediate electron acceptor for the enzyme in this species is believed to be ubiquinone. Couples the redox reaction to proton translocation (for every two electrons transferred, four hydrogen ions are translocated across the cytoplasmic membrane), and thus conserves the redox energy in a proton gradient. This chain is NADH-quinone oxidoreductase subunit I, found in Campylobacter jejuni subsp. jejuni serotype O:23/36 (strain 81-176).